Consider the following 452-residue polypeptide: UDP-N-acetylmuramate--L-alanine ligase (452 aa).

110–116 lines the ATP pocket; sequence GTHGKTT.

Belongs to the MurCDEF family.

It is found in the cytoplasm. The enzyme catalyses UDP-N-acetyl-alpha-D-muramate + L-alanine + ATP = UDP-N-acetyl-alpha-D-muramoyl-L-alanine + ADP + phosphate + H(+). It functions in the pathway cell wall biogenesis; peptidoglycan biosynthesis. Functionally, cell wall formation. This chain is UDP-N-acetylmuramate--L-alanine ligase, found in Francisella philomiragia subsp. philomiragia (strain ATCC 25017 / CCUG 19701 / FSC 153 / O#319-036).